The sequence spans 466 residues: MSTEKDYVVADIGLADFGRKEITIAETEMPGLMSCRTEFGQAKPLKGARITGSLHMTIQTAVLIETLVALGAEVRWASCNIFSTQDHAAAAIAAAGVPVFAIKGESLEDYWVYTDKIFQWADGGLSNMILDDGGDATMYILLGARAEAGEDVLSHPHSEEEEILFAQIKKRLAASPGWFTKQRDAIKGVTEETTTGVNRLYQLSQKGLLPFPAINVNDSVTKSKFDNKYGCKESLVDGIRRGTDVMMAGKVAVVCGYGDVGKGSAASLSGAGARVKVTEADPICALQAAMDGYEVVLLEDVVSSADIFITTTGNKDVIRIDHMRQMKDMAIVGNIGHFDNEIEVAALRNLKWTNVKPQVDLIEFPKGNRIILLSEGRLLNLGNATGHPSFVMSASFTNQTLAQIELFTKPDQYSNQVYILPKHLDEKVARLHLDKLGVKLTQLSEEQAAYIGVSPKGPFKSDHYRY.

Threonine 57, aspartate 132, and glutamate 192 together coordinate substrate. Position 193-195 (193-195) interacts with NAD(+); it reads TTT. Residues lysine 222 and aspartate 226 each contribute to the substrate site. NAD(+)-binding positions include asparagine 227, 256-261, glutamate 279, asparagine 314, 335-337, and asparagine 380; these read GYGDVG and IGH.

It belongs to the adenosylhomocysteinase family. The cofactor is NAD(+).

The protein localises to the cytoplasm. The catalysed reaction is S-adenosyl-L-homocysteine + H2O = L-homocysteine + adenosine. It participates in amino-acid biosynthesis; L-homocysteine biosynthesis; L-homocysteine from S-adenosyl-L-homocysteine: step 1/1. Its function is as follows. May play a key role in the regulation of the intracellular concentration of adenosylhomocysteine. This is Adenosylhomocysteinase from Rhizobium leguminosarum bv. trifolii (strain WSM2304).